The primary structure comprises 221 residues: Germin-like protein 5-1 (221 aa).

The N-terminal stretch at Met1 to Ala25 is a signal peptide. Cys35 and Cys50 are disulfide-bonded. The Cupin type-1 domain occupies Lys62–Glu210. N-linked (GlcNAc...) asparagine glycosylation is present at Asn71. Positions 110, 112, 117, and 156 each coordinate Mn(2+).

The protein belongs to the germin family. Oligomer (believed to be a pentamer but probably hexamer).

It is found in the secreted. It localises to the extracellular space. The protein resides in the apoplast. In terms of biological role, may play a role in plant defense. Probably has no oxalate oxidase activity even if the active site is conserved. The chain is Germin-like protein 5-1 from Oryza sativa subsp. japonica (Rice).